The sequence spans 229 residues: Predicted GPI-anchored protein 19 (229 aa).

The first 20 residues, 1 to 20 (MFSTTSIVLWFTILLPVTLP), serve as a signal peptide directing secretion. The interval 63–92 (DNEQVLRKSKKKKKTTSTGTPGNENTTDFA) is disordered. Residues 81–92 (GTPGNENTTDFA) show a composition bias toward polar residues. N87, N184, and N189 each carry an N-linked (GlcNAc...) asparagine glycan. A lipid anchor (GPI-anchor amidated glycine) is attached at G208. The propeptide at 209–229 (FGSLIPYNSFYLYILLFCIIF) is removed in mature form.

The protein localises to the cell membrane. Its function is as follows. Predicted GPI-anchored protein which may have a role during host infection. This is Predicted GPI-anchored protein 19 (PGA19) from Candida albicans (strain SC5314 / ATCC MYA-2876) (Yeast).